A 72-amino-acid polypeptide reads, in one-letter code: UPF0352 protein NTHI1007 (72 aa).

It belongs to the UPF0352 family.

In Haemophilus influenzae (strain 86-028NP), this protein is UPF0352 protein NTHI1007.